We begin with the raw amino-acid sequence, 371 residues long: Peptide chain release factor 2 (371 aa).

Gln253 is modified (N5-methylglutamine).

Belongs to the prokaryotic/mitochondrial release factor family. In terms of processing, methylated by PrmC. Methylation increases the termination efficiency of RF2.

It localises to the cytoplasm. Its function is as follows. Peptide chain release factor 2 directs the termination of translation in response to the peptide chain termination codons UGA and UAA. The polypeptide is Peptide chain release factor 2 (Mycobacterium marinum (strain ATCC BAA-535 / M)).